A 427-amino-acid polypeptide reads, in one-letter code: Sialic acid TRAP transporter large permease protein SiaM (427 aa).

12 consecutive transmembrane segments (helical) span residues 11-31, 52-72, 82-102, 140-160, 165-185, 214-234, 246-266, 270-290, 301-321, 322-342, 348-368, and 394-414; these read LLFA…AFLI, FTLL…SAGI, SLVG…SLLF, ASCI…YGVV, IGAL…ALMV, AFLS…GKFT, ALFL…IEIL, VNTT…GWIV, DYFL…NLLL, LFLG…PFLV, VGID…IGIL, and VLPL…FPQF.

Belongs to the TRAP transporter large permease family. As to quaternary structure, the complex comprises the extracytoplasmic solute receptor protein SiaP, and the two transmembrane proteins SiaQ and SiaM. SiaQ and SiaM form a tight 1:1 complex.

The protein resides in the cell inner membrane. Part of the tripartite ATP-independent periplasmic (TRAP) transport system SiaPQM that catalyzes unidirectional Na(+)-dependent sialic acid uptake. This Vibrio cholerae serotype O1 (strain ATCC 39315 / El Tor Inaba N16961) protein is Sialic acid TRAP transporter large permease protein SiaM.